Here is a 216-residue protein sequence, read N- to C-terminus: MTSNQITIALTKGRIEKDAVTLLEKAGFNMSFMADKGRNLIFESPDNRFRFLLVKAPDVTTYVRHGVADIGIVGKDVLVEHPTGYLEMLDLNFGLCKFCVASTEDYNPNDHKRKRIATKYPTIATDYFNQKGEDVEIISIQGSVEIAPVIGLADAIVDIVETGSTLVANGLKVYEDICRISARMIVNKASLKNNKEVLQFIRKIESLVGNEEVPFE.

The protein belongs to the ATP phosphoribosyltransferase family. Short subfamily. As to quaternary structure, heteromultimer composed of HisG and HisZ subunits.

Its subcellular location is the cytoplasm. The catalysed reaction is 1-(5-phospho-beta-D-ribosyl)-ATP + diphosphate = 5-phospho-alpha-D-ribose 1-diphosphate + ATP. It participates in amino-acid biosynthesis; L-histidine biosynthesis; L-histidine from 5-phospho-alpha-D-ribose 1-diphosphate: step 1/9. Functionally, catalyzes the condensation of ATP and 5-phosphoribose 1-diphosphate to form N'-(5'-phosphoribosyl)-ATP (PR-ATP). Has a crucial role in the pathway because the rate of histidine biosynthesis seems to be controlled primarily by regulation of HisG enzymatic activity. This is ATP phosphoribosyltransferase from Streptococcus thermophilus (strain ATCC BAA-491 / LMD-9).